The sequence spans 389 residues: Protein WALLS ARE THIN 1 (389 aa).

10 helical membrane passes run 18–38, 49–69, 76–96, 111–131, 143–163, 198–218, 230–250, 266–286, 294–314, and 319–339; these read LQLH…HVVS, LVFP…FAYF, PAIT…GITA, TFAS…AALL, GISK…ITLY, WTLG…WLVF, LSVT…IAAF, LFTI…VQIW, VFVA…ASIA, and FYLG…FVLY. EamA domains follow at residues 32-161 and 210-339; these read AGFH…SVIT and LSWS…FVLY. Phosphoserine is present on S372.

Belongs to the drug/metabolite transporter (DMT) superfamily. Plant drug/metabolite exporter (P-DME) (TC 2.A.7.4) family. As to expression, mostly expressed in stems and hypocotyls, also present in seedlings, root, leaves, flowers and siliques. Ubiquitous, mostly expressed in vascular tissues and secondary wall-forming cells, including developing xylem vessels and fibers.

The protein localises to the vacuole membrane. Functionally, required for secondary wall formation in fibers, especially in short days conditions. Promotes indole metabolism and transport (e.g. tryptophan, neoglucobrassicin and auxin (indole-3-acetic acid)). May prevent salicylic-acid (SA) accumulation. This Arabidopsis thaliana (Mouse-ear cress) protein is Protein WALLS ARE THIN 1 (WAT1).